Here is a 259-residue protein sequence, read N- to C-terminus: UPF0246 protein MADE_1015435 (259 aa).

Belongs to the UPF0246 family.

The chain is UPF0246 protein MADE_1015435 from Alteromonas mediterranea (strain DSM 17117 / CIP 110805 / LMG 28347 / Deep ecotype).